Here is a 209-residue protein sequence, read N- to C-terminus: Ribosomal RNA large subunit methyltransferase E (209 aa).

Residues G63, W65, D83, D99, and D124 each contribute to the S-adenosyl-L-methionine site. The Proton acceptor role is filled by K164.

It belongs to the class I-like SAM-binding methyltransferase superfamily. RNA methyltransferase RlmE family.

It localises to the cytoplasm. It carries out the reaction uridine(2552) in 23S rRNA + S-adenosyl-L-methionine = 2'-O-methyluridine(2552) in 23S rRNA + S-adenosyl-L-homocysteine + H(+). Functionally, specifically methylates the uridine in position 2552 of 23S rRNA at the 2'-O position of the ribose in the fully assembled 50S ribosomal subunit. The protein is Ribosomal RNA large subunit methyltransferase E of Aliivibrio fischeri (strain ATCC 700601 / ES114) (Vibrio fischeri).